Here is a 660-residue protein sequence, read N- to C-terminus: UvrABC system protein B (660 aa).

The Helicase ATP-binding domain occupies 26–196 (DGIDEKKEHQ…ELNKGQFDVK (171 aa)). 39–46 (GVTGSGKT) is an ATP binding site. A Beta-hairpin motif is present at residues 92–115 (YFDFYKPEAYIPKSDLYIEKTSKN). Residues 431–593 (QIEDIYDHLK…IIPKTIVKPI (163 aa)) form the Helicase C-terminal domain. Positions 622–657 (KKFIDQMVRKMTQLAKANKFEEAIEIRDYLIEIGIE) constitute a UVR domain.

This sequence belongs to the UvrB family. In terms of assembly, forms a heterotetramer with UvrA during the search for lesions. Interacts with UvrC in an incision complex.

The protein localises to the cytoplasm. Its function is as follows. The UvrABC repair system catalyzes the recognition and processing of DNA lesions. A damage recognition complex composed of 2 UvrA and 2 UvrB subunits scans DNA for abnormalities. Upon binding of the UvrA(2)B(2) complex to a putative damaged site, the DNA wraps around one UvrB monomer. DNA wrap is dependent on ATP binding by UvrB and probably causes local melting of the DNA helix, facilitating insertion of UvrB beta-hairpin between the DNA strands. Then UvrB probes one DNA strand for the presence of a lesion. If a lesion is found the UvrA subunits dissociate and the UvrB-DNA preincision complex is formed. This complex is subsequently bound by UvrC and the second UvrB is released. If no lesion is found, the DNA wraps around the other UvrB subunit that will check the other stand for damage. The chain is UvrABC system protein B from Metamycoplasma arthritidis (strain 158L3-1) (Mycoplasma arthritidis).